Consider the following 404-residue polypeptide: Phosphoglycerate kinase (404 aa).

Residues 26–28, R41, 64–67, R124, and R161 each bind substrate; these read DFN and HLGR. Residues K212, G301, E332, and 359–362 contribute to the ATP site; that span reads GGDS.

This sequence belongs to the phosphoglycerate kinase family. As to quaternary structure, monomer.

The protein resides in the cytoplasm. It catalyses the reaction (2R)-3-phosphoglycerate + ATP = (2R)-3-phospho-glyceroyl phosphate + ADP. Its pathway is carbohydrate degradation; glycolysis; pyruvate from D-glyceraldehyde 3-phosphate: step 2/5. This chain is Phosphoglycerate kinase, found in Mesomycoplasma hyopneumoniae (strain 232) (Mycoplasma hyopneumoniae).